A 368-amino-acid polypeptide reads, in one-letter code: Methionine import ATP-binding protein MetN (368 aa).

Residues 1–14 (MASDAQPSVDQPSA) show a composition bias toward polar residues. The interval 1-27 (MASDAQPSVDQPSAGTPGATGNSTGTT) is disordered. Positions 15-27 (GTPGATGNSTGTT) are enriched in low complexity. The ABC transporter domain maps to 31 to 270 (IVFRDVTKIF…PQTKTAANFV (240 aa)). 67 to 74 (GYSGAGKS) is a binding site for ATP.

The protein belongs to the ABC transporter superfamily. Methionine importer (TC 3.A.1.24) family. As to quaternary structure, the complex is composed of two ATP-binding proteins (MetN), two transmembrane proteins (MetI) and a solute-binding protein (MetQ).

Its subcellular location is the cell membrane. The catalysed reaction is L-methionine(out) + ATP + H2O = L-methionine(in) + ADP + phosphate + H(+). It catalyses the reaction D-methionine(out) + ATP + H2O = D-methionine(in) + ADP + phosphate + H(+). Functionally, part of the ABC transporter complex MetNIQ involved in methionine import. Responsible for energy coupling to the transport system. The chain is Methionine import ATP-binding protein MetN from Corynebacterium jeikeium (strain K411).